Consider the following 261-residue polypeptide: MALIGVLANLLILCLSYARTAPDRIIGGLECNQNEHRSLVLLYNSGGFFCSGTLINHEWVLTAAHCNRENIQIKLGVHNIHVPNEDEQIRVPKEKVCCLGTMNCTQWNQDIMLIRLNSSVNYSTHIAPLSLPSNPPSVGSVCRVMGWGTITSPEVTYPEVPHCVNIQILHKELCEAAYPILLGNSNILCAGKLLGDKDSCKGDSGGPLICNGQIQGIVSWGGFPCAQILEPGVYTKVFDYIDWIQDIMAGNANVICPGDNF.

The N-terminal stretch at 1–20 (MALIGVLANLLILCLSYART) is a signal peptide. A propeptide spanning residues 21 to 24 (APDR) is cleaved from the precursor. The region spanning 25–249 (IIGGLECNQN…YIDWIQDIMA (225 aa)) is the Peptidase S1 domain. 6 disulfides stabilise this stretch: Cys-31–Cys-163, Cys-50–Cys-66, Cys-98–Cys-256, Cys-142–Cys-210, Cys-174–Cys-189, and Cys-200–Cys-225. The active-site Charge relay system is His-65. A glycan (N-linked (GlcNAc...) asparagine) is linked at Asn-103. The Charge relay system role is filled by Asp-110. Asn-117 and Asn-121 each carry an N-linked (GlcNAc...) asparagine glycan. Ser-204 (charge relay system) is an active-site residue.

The protein belongs to the peptidase S1 family. Snake venom subfamily. As to quaternary structure, monomer. Expressed by the venom gland.

It localises to the secreted. In terms of biological role, snake venom serine protease that may act in the hemostasis system of the prey. This chain is Snake venom serine protease, found in Philodryas olfersii (Green snake).